The primary structure comprises 331 residues: B-box zinc finger protein 21 (331 aa).

Zn(2+) is bound by residues C5, C8, C28, H34, C60, C63, C83, and H93. A B box-type 1; atypical zinc finger spans residues 5-47 (CDVCDKEEASVFCTADEASLCGGCDHQVHHANKLASKHLRFSL). The B box-type 2; atypical zinc finger occupies 60-102 (CDICQDKKALLFCQQDRAILCKDCDSSIHAANEHTKKHDRFLL). Low complexity-rich tracts occupy residues 115 to 126 (KPTSKSSSSSSS) and 228 to 238 (NNNNNNNNNNN). 2 disordered regions span residues 115–167 (KPTS…GGDA) and 209–241 (DDDG…NTVS).

In terms of assembly, interacts with COP1, HY5 and BBX32. Interacts with FLZ1.

Its subcellular location is the nucleus. Functionally, transcription activator that acts as a positive regulator of seedling photomorphogenesis. Acts downstream of COP1 and play an important role in early and long-term adjustment of the shade avoidance syndrome (SAS) responses in natural environments. This chain is B-box zinc finger protein 21, found in Arabidopsis thaliana (Mouse-ear cress).